Consider the following 1149-residue polypeptide: Probable phospholipid-transporting ATPase IA (1149 aa).

At 1–65 (MPTMRRTVSE…TAKYNIITFL (65 aa)) the chain is on the cytoplasmic side. Ser25 is modified (phosphoserine). Thr28 carries the phosphothreonine modification. Ser29 carries the phosphoserine modification. The chain crosses the membrane as a helical span at residues 66–86 (PRFLYSQFRRAANSFFLFIAL). Over 87–92 (LQQIPD) the chain is Extracellular. Residues 93-115 (VSPTGRYTTLVPLLFILAVAAIK) traverse the membrane as a helical segment. Residues 116-297 (EIIEDIKRHK…SNVERITNVQ (182 aa)) are Cytoplasmic-facing. A helical transmembrane segment spans residues 298–319 (ILILFCILIAMSLVCSVGSAIW). Over 320 to 344 (NRRHSGRDWYLNLNYGGANNFGLNF) the chain is Extracellular. Residues 345–366 (LTFIILFNNLIPISLLVTLEVV) form a helical membrane-spanning segment. Residues 367-842 (KFTQAYFINW…GAWNYNRGSK (476 aa)) lie on the Cytoplasmic side of the membrane. The active-site 4-aspartylphosphate intermediate is Asp409. ATP-binding positions include Asp409, Lys410, Thr411, Glu493, Phe534, Lys557, Arg590, Thr670, Gly671, Asp672, 726-733 (ALIIDGKT), Arg760, and Lys766. Asp409 serves as a coordination point for Mg(2+). Thr411 is a Mg(2+) binding site. Residue Asp786 coordinates Mg(2+). ATP-binding residues include Asn789 and Asp790. Residue Asp790 coordinates Mg(2+). A helical transmembrane segment spans residues 843 to 863 (CILYCFYKNIVLYIIEIWFAF). The Extracellular segment spans residues 864–875 (VNGFSGQILFER). Residues 876–895 (WCIGLYNVMFTAMPPLTLGI) form a helical membrane-spanning segment. Topologically, residues 896-925 (FERSCRKEYMLKYPELYKTSQNALDFNTKV) are cytoplasmic. A helical membrane pass occupies residues 926–947 (FWVHCLNGLFHSVILFWFPLKA). Topologically, residues 948–961 (LQYGTVFENGRTSD) are extracellular. Residues 962–984 (YLLLGNFVYTFVVITVCLKAGLE) traverse the membrane as a helical segment. At 985–990 (TSYWTW) the chain is on the cytoplasmic side. The helical transmembrane segment at 991 to 1011 (FSHIAIWGSIALWVVFFGIYS) threads the bilayer. The Extracellular portion of the chain corresponds to 1012–1029 (SLWPAVPMAPDMSGEAAM). The helical transmembrane segment at 1030–1055 (LFSSGVFWMGLLFIPVASLLLDVVYK) threads the bilayer. At 1056–1149 (VIKRTAFKTL…DTTKQRPDEW (94 aa)) the chain is on the cytoplasmic side. 1080 to 1087 (GAVVLGKS) contributes to the ATP binding site. Ser1111 carries the phosphoserine modification.

This sequence belongs to the cation transport ATPase (P-type) (TC 3.A.3) family. Type IV subfamily. In terms of assembly, component of a P4-ATPase flippase complex which consists of a catalytic alpha subunit and an accessory beta subunit. Interacts with TMEM30A to form a flippase complex; this complex forms an intermediate phosphoenzyme. Interacts with TMEM30B; this interaction is reported conflictingly. Mg(2+) serves as cofactor. Cleaved by calpain in a caspase- and calcium influx-dependent manner during platelet apoptosis leading to a 100 kDa polypeptide. In terms of tissue distribution, kidney.

The protein localises to the cytoplasmic vesicle. The protein resides in the secretory vesicle. It is found in the chromaffin granule membrane. Its subcellular location is the cytoplasmic granule. It localises to the cell membrane. The protein localises to the endoplasmic reticulum. The protein resides in the golgi apparatus. The catalysed reaction is ATP + H2O + phospholipidSide 1 = ADP + phosphate + phospholipidSide 2.. It carries out the reaction a 1,2-diacyl-sn-glycero-3-phospho-L-serine(out) + ATP + H2O = a 1,2-diacyl-sn-glycero-3-phospho-L-serine(in) + ADP + phosphate + H(+). Its function is as follows. Catalytic component of a P4-ATPase flippase complex which catalyzes the hydrolysis of ATP coupled to the transport of aminophospholipids from the outer to the inner leaflet of various membranes and ensures the maintenance of asymmetric distribution of phospholipids. Phospholipid translocation also seems to be implicated in vesicle formation and in uptake of lipid signaling molecules. In vitro, its ATPase activity is selectively and stereospecifically stimulated by phosphatidylserine (PS). The flippase complex ATP8A1:TMEM30A seems to play a role in regulation of cell migration probably involving flippase-mediated translocation of phosphatidylethanolamine (PE) at the cell membrane. Acts as aminophospholipid translocase at the cell membrane in neuronal cells. This chain is Probable phospholipid-transporting ATPase IA, found in Bos taurus (Bovine).